The chain runs to 229 residues: Bcl-2-like protein 1 (229 aa).

The BH4 motif lies at 4-24 (SNRELVIDFVSYKLSQRGHCW). A BH3 motif is present at residues 82 to 96 (VRQALRDAGDEFELR). Positions 125-144 (ELFHDGVNWGRIVAFFSFGG) match the BH1 motif. The BH2 signature appears at 176 to 191 (PWIQENGGWERFVDLY). The chain crosses the membrane as a helical span at residues 206 to 223 (FNKWLLTGATVAGVLLLG).

This sequence belongs to the Bcl-2 family. In terms of tissue distribution, highest expression in organs with lymphoid development.

It localises to the mitochondrion membrane. The protein resides in the nucleus membrane. Its subcellular location is the mitochondrion matrix. The protein localises to the cytoplasm. It is found in the cytoskeleton. It localises to the microtubule organizing center. The protein resides in the centrosome. Its subcellular location is the cytosol. The protein localises to the cytoplasmic vesicle. It is found in the secretory vesicle. It localises to the synaptic vesicle membrane. Functionally, dominant regulator of apoptotic cell death. The long form displays cell death repressor activity, whereas the short isoform promotes apoptosis. Also acts as a regulator of G2 checkpoint and progression to cytokinesis during mitosis. This is Bcl-2-like protein 1 (BCL2L1) from Gallus gallus (Chicken).